A 343-amino-acid chain; its full sequence is Flavone 3'-O-methyltransferase OMT1 (343 aa).

Asn-107 contributes to the (E)-ferulate binding site. S-adenosyl-L-homocysteine contacts are provided by Gly-184, Asp-207, Asp-227, Met-228, Met-240, and Lys-241. His-245 serves as the catalytic Proton acceptor. Asp-246 is a (E)-5-hydroxyferulate binding site. Catalysis depends on residues Glu-273 and Glu-305.

Belongs to the class I-like SAM-binding methyltransferase superfamily. Cation-independent O-methyltransferase family. COMT subfamily. In terms of assembly, homodimer.

The enzyme catalyses (E)-5-hydroxyferulate + S-adenosyl-L-methionine = (E)-sinapate + S-adenosyl-L-homocysteine + H(+). It carries out the reaction luteolin + S-adenosyl-L-methionine = chrysoeriol + S-adenosyl-L-homocysteine + H(+). It catalyses the reaction quercetin + S-adenosyl-L-methionine = isorhamnetin + S-adenosyl-L-homocysteine + H(+). The catalysed reaction is (E)-caffeate + S-adenosyl-L-methionine = (E)-ferulate + S-adenosyl-L-homocysteine + H(+). The enzyme catalyses a 3'-hydroxyflavone + S-adenosyl-L-methionine = a 3'-methoxyflavone + S-adenosyl-L-homocysteine + H(+). It participates in flavonoid metabolism. Its function is as follows. Catalyzes the 3'-O-methylation of the flavonoids luteolin and quercetin. Catalyzes the 3- of 5-O-methylation of the phenylpropanoids caffeate and 5-hydroxyferulate. Substrate preference is 5-hydroxyferulate &gt; luteolin &gt; quercetin &gt; caffeate. Apigenin, kempferol and 3,4-dimethylquercetin do not seem to be substrates for methylation. This chain is Flavone 3'-O-methyltransferase OMT1, found in Chrysosplenium americanum (American golden saxifrage).